A 428-amino-acid polypeptide reads, in one-letter code: 3-phosphoshikimate 1-carboxyvinyltransferase (428 aa).

3-phosphoshikimate contacts are provided by Lys22, Ser23, and Arg27. Phosphoenolpyruvate is bound at residue Lys22. Phosphoenolpyruvate contacts are provided by Gly94 and Arg122. The 3-phosphoshikimate site is built by Ser167, Gln169, Asp314, and Lys341. Gln169 provides a ligand contact to phosphoenolpyruvate. The Proton acceptor role is filled by Asp314. Arg345 and Arg387 together coordinate phosphoenolpyruvate.

This sequence belongs to the EPSP synthase family. As to quaternary structure, monomer.

The protein resides in the cytoplasm. It catalyses the reaction 3-phosphoshikimate + phosphoenolpyruvate = 5-O-(1-carboxyvinyl)-3-phosphoshikimate + phosphate. Its pathway is metabolic intermediate biosynthesis; chorismate biosynthesis; chorismate from D-erythrose 4-phosphate and phosphoenolpyruvate: step 6/7. In terms of biological role, catalyzes the transfer of the enolpyruvyl moiety of phosphoenolpyruvate (PEP) to the 5-hydroxyl of shikimate-3-phosphate (S3P) to produce enolpyruvyl shikimate-3-phosphate and inorganic phosphate. The chain is 3-phosphoshikimate 1-carboxyvinyltransferase from Geotalea uraniireducens (strain Rf4) (Geobacter uraniireducens).